Reading from the N-terminus, the 425-residue chain is Dihydroorotase (425 aa).

2 residues coordinate Zn(2+): His58 and His60. Substrate is bound by residues 60–62 (HFR) and Asn92. 3 residues coordinate Zn(2+): Asp150, His177, and His230. Asn276 contributes to the substrate binding site. Zn(2+) is bound at residue Asp303. Asp303 is an active-site residue. Substrate is bound by residues His307 and 321-322 (FG).

The protein belongs to the metallo-dependent hydrolases superfamily. DHOase family. Class I DHOase subfamily. Requires Zn(2+) as cofactor.

It catalyses the reaction (S)-dihydroorotate + H2O = N-carbamoyl-L-aspartate + H(+). Its pathway is pyrimidine metabolism; UMP biosynthesis via de novo pathway; (S)-dihydroorotate from bicarbonate: step 3/3. Catalyzes the reversible cyclization of carbamoyl aspartate to dihydroorotate. The sequence is that of Dihydroorotase from Pediococcus pentosaceus (strain ATCC 25745 / CCUG 21536 / LMG 10740 / 183-1w).